A 172-amino-acid polypeptide reads, in one-letter code: Crossover junction endodeoxyribonuclease RuvC (172 aa).

Catalysis depends on residues D11, E71, and D143. D11, E71, and D143 together coordinate Mg(2+).

The protein belongs to the RuvC family. Homodimer which binds Holliday junction (HJ) DNA. The HJ becomes 2-fold symmetrical on binding to RuvC with unstacked arms; it has a different conformation from HJ DNA in complex with RuvA. In the full resolvosome a probable DNA-RuvA(4)-RuvB(12)-RuvC(2) complex forms which resolves the HJ. Requires Mg(2+) as cofactor.

It is found in the cytoplasm. It catalyses the reaction Endonucleolytic cleavage at a junction such as a reciprocal single-stranded crossover between two homologous DNA duplexes (Holliday junction).. Its function is as follows. The RuvA-RuvB-RuvC complex processes Holliday junction (HJ) DNA during genetic recombination and DNA repair. Endonuclease that resolves HJ intermediates. Cleaves cruciform DNA by making single-stranded nicks across the HJ at symmetrical positions within the homologous arms, yielding a 5'-phosphate and a 3'-hydroxyl group; requires a central core of homology in the junction. The consensus cleavage sequence is 5'-(A/T)TT(C/G)-3'. Cleavage occurs on the 3'-side of the TT dinucleotide at the point of strand exchange. HJ branch migration catalyzed by RuvA-RuvB allows RuvC to scan DNA until it finds its consensus sequence, where it cleaves and resolves the cruciform DNA. In Brucella anthropi (strain ATCC 49188 / DSM 6882 / CCUG 24695 / JCM 21032 / LMG 3331 / NBRC 15819 / NCTC 12168 / Alc 37) (Ochrobactrum anthropi), this protein is Crossover junction endodeoxyribonuclease RuvC.